The following is a 944-amino-acid chain: Translation factor GUF1 homolog, mitochondrial (944 aa).

The 179-residue stretch at 201–379 (KNVRNFCILA…IITDIPYPPI (179 aa)) folds into the tr-type G domain. GTP-binding positions include 210–217 (AHIDSGKS), 271–275 (DTPGH), and 325–328 (NKID).

It belongs to the TRAFAC class translation factor GTPase superfamily. Classic translation factor GTPase family. LepA subfamily.

It is found in the mitochondrion inner membrane. It catalyses the reaction GTP + H2O = GDP + phosphate + H(+). Functionally, promotes mitochondrial protein synthesis. May act as a fidelity factor of the translation reaction, by catalyzing a one-codon backward translocation of tRNAs on improperly translocated ribosomes. Binds to mitochondrial ribosomes in a GTP-dependent manner. The chain is Translation factor GUF1 homolog, mitochondrial from Plasmodium yoelii yoelii.